Consider the following 566-residue polypeptide: MTSTAYSRPSKLPGGGNGSDRRLPPRLMRGLTTKIEPKKLGVGLLAGCCLALLTYVSLAKLFAIYSPVFASTANTSALMQNSPPSSPETGPIPPQETAAGAGNNDSTVDPVDLPEDKSLVEAQPQEPGFPSAESQEPGLPAALSRKEDDAERAAAAAASEIKQSEKKNGVAAGGDTKIKCDENGVDEGFPYARPSVCELYGDVRVSPKQKTIYVVNPSGAGGFDENGEKRLRPYARKDDFLLPGVVEVTIKSVPSEAAAPKCTKQHAVPAVVFSVAGYTDNFFHDMTDAMIPLFLTTAHLKGEVQILITNYKPWWVQKYTPLLRKLSNYDVINFDEDAGVHCFPQGYLGLYRDRDLIISPHPTRNPRNYTMVDYNRFLRDALELRRDRPSVLGEEPGMRPRMLIISRAGTRKLLNLEEVAAAATELGFNVTVAEAGADVPAFAALVNSADVLLAVHGAGLTNQIFLPAEAVVVQIVPWGNMDWMATNFYGQPARDMQLRYVEYYVGEEETSLKHNYSRDHMVFKDPKALHAQGWQTLAATIMKQDVEVNLTRFRPILLQALDRLQQ.

Residues 1–25 (MTSTAYSRPSKLPGGGNGSDRRLPP) form a disordered region. Over 1-43 (MTSTAYSRPSKLPGGGNGSDRRLPPRLMRGLTTKIEPKKLGVG) the chain is Cytoplasmic. The helical; Signal-anchor for type II membrane protein transmembrane segment at 44 to 64 (LLAGCCLALLTYVSLAKLFAI) threads the bilayer. Residues 65 to 566 (YSPVFASTAN…LLQALDRLQQ (502 aa)) are Lumenal-facing. A glycan (N-linked (GlcNAc...) asparagine) is linked at asparagine 74. Residues 78–180 (LMQNSPPSSP…AAGGDTKIKC (103 aa)) are disordered. Residues 84–94 (PSSPETGPIPP) are compositionally biased toward pro residues. 5 N-linked (GlcNAc...) asparagine glycosylation sites follow: asparagine 104, asparagine 368, asparagine 429, asparagine 515, and asparagine 549.

This sequence belongs to the glycosyltransferase 61 family. As to expression, highly expressed in young panicles.

The protein resides in the golgi apparatus membrane. The protein operates within glycan metabolism. Functionally, glycosyltransferase involved in the xylosylation of xylan, the major hemicellulose (non-cellulosic component) of primary and secondary walls of angiosperms. Possesses beta-1,2-xylosyltransferase activity, transferring xylose from UDP-xylose to the xylan backbone. In Oryza sativa subsp. japonica (Rice), this protein is Beta-1,2-xylosyltransferease XAX1.